The primary structure comprises 42 residues: Beta-defensin 13 (42 aa).

3 cysteine pairs are disulfide-bonded: C9/C38, C16/C31, and C21/C39.

Belongs to the beta-defensin family. In terms of tissue distribution, neutrophilic granules.

It is found in the secreted. Has bactericidal activity. Active against E.coli ML35 and S.aureus 502A. The polypeptide is Beta-defensin 13 (DEFB13) (Bos taurus (Bovine)).